Consider the following 441-residue polypeptide: Malate dehydrogenase [NADP], chloroplastic (441 aa).

Residues 1–58 (MALTQLNSTCSKPQLHSSSQLSFLSRTRTRTLPRHYHSTFAPLHRTQHARISCSVAPN) constitute a chloroplast transit peptide. Cys76 and Cys81 are disulfide-bonded. 105–111 (GAAGMIS) lines the NADP(+) pocket. Residues Arg186 and Arg192 each contribute to the substrate site. Asn199 provides a ligand contact to NADP(+). An NAD(+)-binding site is contributed by Gln206. An NADP(+)-binding site is contributed by 223-225 (VGN). Asn225 and Arg256 together coordinate substrate. His281 functions as the Proton acceptor in the catalytic mechanism. Cys417 and Cys429 are joined by a disulfide.

It belongs to the LDH/MDH superfamily. MDH type 2 family. In terms of assembly, homodimer.

The protein localises to the plastid. The protein resides in the chloroplast. It catalyses the reaction (S)-malate + NADP(+) = oxaloacetate + NADPH + H(+). Its activity is regulated as follows. Chloroplast NADP-MDH is activated upon illumination. In order to be enzymatically active, disulfide bridges on the protein must be reduced by thioredoxin which receives electrons from ferredoxin and the electron transport system of photosynthesis. Functionally, the chloroplastic, NADP-dependent form is essential for the photosynthesis C4 cycle, which allows plants to circumvent the problem of photorespiration. In C4 plants, NADP-MDH activity acts to convert oxaloacetate to malate in chloroplasts of mesophyll cells for transport to the bundle sheath cells. The protein is Malate dehydrogenase [NADP], chloroplastic of Pisum sativum (Garden pea).